Reading from the N-terminus, the 276-residue chain is Elongation factor Ts (276 aa).

Residues 79-82 form an involved in Mg(2+) ion dislocation from EF-Tu region; sequence TDFV.

It belongs to the EF-Ts family.

It is found in the cytoplasm. Associates with the EF-Tu.GDP complex and induces the exchange of GDP to GTP. It remains bound to the aminoacyl-tRNA.EF-Tu.GTP complex up to the GTP hydrolysis stage on the ribosome. The chain is Elongation factor Ts from Buchnera aphidicola subsp. Cinara cedri (strain Cc).